Consider the following 462-residue polypeptide: Zinc transporter zipt-7.2 (462 aa).

Residues 2-22 (LVKSCIFLSFLAIAAYGQAHL) traverse the membrane as a helical segment. Positions 39-134 (HHQGHGHAHG…HGHSHGAESA (96 aa)) are disordered. Over residues 40 to 51 (HQGHGHAHGGHG) the composition is skewed to basic residues. The segment covering 65-74 (AAAAEAATAA) has biased composition (low complexity). A compositionally biased stretch (basic and acidic residues) spans 75–94 (AHDHGHAHDHDHGHAHDHGH). Residues 111-120 (HGHAHDHHGH) are compositionally biased toward basic residues. A compositionally biased stretch (basic and acidic residues) spans 121-132 (SHEDHGHSHGAE). Residues 161 to 181 (AISATLLISAAPCFILMFIPI) form a helical membrane-spanning segment. An N-linked (GlcNAc...) asparagine glycan is attached at Asn-184. A helical membrane pass occupies residues 194-214 (VLLAFGSGGLLGDAFLHLIPH). The disordered stretch occupies residues 219–239 (GDGHGHSHSHGHSHGGGGHSH). A helical membrane pass occupies residues 244–264 (MSVGGWVLGGIIAFLTVEKLV). The disordered stretch occupies residues 270–307 (EDGHGHSHGHSHGGEKKETKEKDSKDKVAKKEEKPEKD). The segment covering 281 to 307 (HGGEKKETKEKDSKDKVAKKEEKPEKD) has biased composition (basic and acidic residues). N-linked (GlcNAc...) asparagine glycosylation is present at Asn-326. 3 helical membrane-spanning segments follow: residues 333-353 (IGAS…TVLV), 376-396 (AMLI…ISLF), and 410-430 (SWVL…SVIP). Asn-435 is a glycosylation site (N-linked (GlcNAc...) asparagine). Residues 441–461 (TVKEIFAILTGIFLMYLIAIY) traverse the membrane as a helical segment.

It belongs to the ZIP transporter (TC 2.A.5) family. KE4/Catsup subfamily. Expressed in somatic tissues.

Its subcellular location is the membrane. In terms of biological role, zinc transporter. The polypeptide is Zinc transporter zipt-7.2 (Caenorhabditis elegans).